The following is a 162-amino-acid chain: Precursor protein UG (162 aa).

The N-terminal stretch at methionine 1–alanine 19 is a signal peptide. Residues asparagine 20–proline 23 constitute a propeptide that is removed on maturation. 2 disulfide bridges follow: cysteine 30–cysteine 42 and cysteine 33–cysteine 49. A propeptide spanning residues valine 56 to proline 59 is cleaved from the precursor. Cystine bridges form between cysteine 66/cysteine 78 and cysteine 69/cysteine 85. Positions valine 92–proline 95 are excised as a propeptide. 2 disulfide bridges follow: cysteine 102–cysteine 114 and cysteine 105–cysteine 121. Positions valine 128–proline 131 are excised as a propeptide. 2 disulfides stabilise this stretch: cysteine 138/cysteine 150 and cysteine 141/cysteine 157.

The protein belongs to the sea anemone BBH family.

The protein localises to the secreted. It is found in the nematocyst. Its function is as follows. Affects the ASIC3 channel (ACCN3) and produces analgesic effects. It produces a reversible inhibition effect on both the transient and the sustained current of human ASIC3 channels expressed in X.laevis oocytes. It completely blocks the transient component (IC(50)=10 uM) and partially (48%) inhibits the amplitude of the sustained component (IC(50)=1.44 uM). Using in vivo tests in mice, it reverses inflammatory and acid-induced pain. In terms of biological role, does not affect the ASIC3 channel. Does not cause lethality or paralysis of noble crayfish (A.astacus) at a dose of 1 mg/kg. The chain is Precursor protein UG from Urticina grebelnyi (Painted anemone).